The sequence spans 135 residues: Membrane-anchored ubiquitin-fold protein 4 (135 aa).

Residues 1-20 (MAEKEEGKVAAEGGAEAEAD) are disordered. The region spanning 23–92 (VEVKFRLFDG…NDKNIAQCRA (70 aa)) is the Ubiquitin-like domain. At C132 the chain carries Cysteine methyl ester. C132 carries the S-geranylgeranyl cysteine lipid modification. Positions 133-135 (TIL) are cleaved as a propeptide — removed in mature form.

It is found in the cell membrane. Functionally, may serve as docking site to facilitate the association of other proteins to the plasma membrane. In Oryza sativa subsp. japonica (Rice), this protein is Membrane-anchored ubiquitin-fold protein 4 (MUB4).